A 225-amino-acid chain; its full sequence is Sugar fermentation stimulation protein homolog (225 aa).

The protein belongs to the SfsA family.

The sequence is that of Sugar fermentation stimulation protein homolog from Sulfurisphaera tokodaii (strain DSM 16993 / JCM 10545 / NBRC 100140 / 7) (Sulfolobus tokodaii).